We begin with the raw amino-acid sequence, 357 residues long: Peptide chain release factor 1 (357 aa).

Residue Q236 is modified to N5-methylglutamine.

It belongs to the prokaryotic/mitochondrial release factor family. Post-translationally, methylated by PrmC. Methylation increases the termination efficiency of RF1.

It localises to the cytoplasm. Peptide chain release factor 1 directs the termination of translation in response to the peptide chain termination codons UAG and UAA. This is Peptide chain release factor 1 from Mycobacterium sp. (strain JLS).